A 180-amino-acid chain; its full sequence is Translation initiation factor IF-3 (180 aa).

Belongs to the IF-3 family. As to quaternary structure, monomer.

The protein resides in the cytoplasm. In terms of biological role, IF-3 binds to the 30S ribosomal subunit and shifts the equilibrium between 70S ribosomes and their 50S and 30S subunits in favor of the free subunits, thus enhancing the availability of 30S subunits on which protein synthesis initiation begins. In Shewanella baltica (strain OS223), this protein is Translation initiation factor IF-3.